A 1054-amino-acid polypeptide reads, in one-letter code: CCAAT/enhancer-binding protein zeta (1054 aa).

The segment covering 1–20 has biased composition (basic and acidic residues); sequence MAAVKEPLEFHAKRPWRPEE. Disordered stretches follow at residues 1–42 and 102–160; these read MAAV…GFSL and VEED…PKVK. Over residues 21–34 the composition is skewed to acidic residues; the sequence is AVEDPDEEDEDNTS. The span at 109–120 shows a compositional bias: basic and acidic residues; it reads EKENSSKKEVKI. Ser-113 carries the phosphoserine modification. Residues 124 to 138 are compositionally biased toward polar residues; it reads NNKNTAESQRTSVNK. At Ser-629 the chain carries Phosphoserine. Residue Lys-695 is modified to N6-acetyllysine. Ser-835 is subject to Phosphoserine. Disordered stretches follow at residues 873 to 902 and 915 to 969; these read RTKG…DEVS and DEDG…KKRN. 2 stretches are compositionally biased toward acidic residues: residues 882–902 and 915–933; these read LDED…DEVS and DEDG…ESVP. Ser-959, Ser-973, and Ser-978 each carry phosphoserine. Residues 1031-1054 are disordered; the sequence is IIKKKKHFKKKRIKTTQKTKKQRK.

It belongs to the CBF/MAK21 family.

It localises to the nucleus. Its function is as follows. Stimulates transcription from the HSP70 promoter. The chain is CCAAT/enhancer-binding protein zeta (CEBPZ) from Homo sapiens (Human).